Consider the following 256-residue polypeptide: uncharacterized protein (256 aa).

Positions 1 to 24 (MIKRVNKLVLGISFLFLIISIFAG) are cleaved as a signal peptide. Cys-25 carries the N-palmitoyl cysteine lipid modification. Cys-25 is lipidated: S-diacylglycerol cysteine.

Belongs to the staphylococcal tandem lipoprotein family.

Its subcellular location is the cell membrane. This is an uncharacterized protein from Staphylococcus aureus (strain Mu50 / ATCC 700699).